Consider the following 43-residue polypeptide: Neurotrophic factor BDNF (43 aa).

It belongs to the NGF-beta family.

The protein localises to the secreted. In terms of biological role, promotes the survival of neuronal populations that are all located either in the central nervous system or directly connected to it. The polypeptide is Neurotrophic factor BDNF (bdnf) (Raja clavata (Thornback ray)).